The chain runs to 917 residues: PAX3- and PAX7-binding protein 1 (917 aa).

Basic residues predominate over residues 1–11 (MFRKARRVNVR). Disordered stretches follow at residues 1–123 (MFRK…FKVK), 143–205 (LEKS…GAFS), and 229–275 (RKKR…RIVF). Residue Ser-16 is modified to Phosphoserine. Residues 16–28 (SEEEERERDEEQE) show a composition bias toward acidic residues. Composition is skewed to gly residues over residues 40-50 (EEAGPGGGDRA) and 73-85 (AEAG…GAEP). A Glycyl lysine isopeptide (Lys-Gly) (interchain with G-Cter in SUMO1); alternate cross-link involves residue Lys-149. Lys-149 participates in a covalent cross-link: Glycyl lysine isopeptide (Lys-Gly) (interchain with G-Cter in SUMO2); alternate. A phosphoserine mark is found at Ser-154, Ser-155, and Ser-158. The span at 161-172 (PLDKTGHVKDTN) shows a compositional bias: basic and acidic residues. Over residues 183–193 (GEDEMDMESEK) the composition is skewed to acidic residues. Ser-191 is subject to Phosphoserine. Residues 234–256 (MARELGDFTPHDNEPGKGRLVRE) show a composition bias toward basic and acidic residues. Over residues 257–268 (DENDASDDEDDD) the composition is skewed to acidic residues. Residues Ser-262 and Ser-295 each carry the phosphoserine modification. Disordered regions lie at residues 362–381 (SSDA…TPSN) and 530–564 (AERE…EETS). Positions 378-558 (TPSNEMTPVT…MADHLEGLSS (181 aa)) are necessary and sufficient for interaction with PAX7. Basic and acidic residues predominate over residues 542–554 (AREQTGKMADHLE). Phosphoserine occurs at positions 557 and 558. Thr-563 bears the Phosphothreonine mark.

This sequence belongs to the GCF family. Interacts with PAX3 and PAX7. Interacts with WDR5; associates with a histone methyltransferase (HMT) complex composed at least of RBBP5, ASH2L, SET1, SET2 and KMT2A/MLL1, KMT2D/MLL2, KMT2C/MLL3 and KMT2B/MLL4 through direct interaction with WDR5. In terms of tissue distribution, ubiquitous.

Its subcellular location is the nucleus. Its function is as follows. Adapter protein linking the transcription factors PAX3 and PAX7 to the histone methylation machinery and involved in myogenesis. Associates with a histone methyltransferase complex that specifically mediates dimethylation and trimethylation of 'Lys-4' of histone H3. Mediates the recruitment of that complex to the transcription factors PAX3 and PAX7 on chromatin to regulate the expression of genes involved in muscle progenitor cells proliferation including ID3 and CDC20. This chain is PAX3- and PAX7-binding protein 1 (PAXBP1), found in Homo sapiens (Human).